The following is a 284-amino-acid chain: Halorhodopsin (284 aa).

Residues 1–30 are Extracellular-facing; it reads MIETAAADILAGGMVPLEMTQTQIFEAVQS. The helical transmembrane segment at 31–56 threads the bilayer; the sequence is DTLLASSLWINIALAGLSILLFVYMG. The Cytoplasmic portion of the chain corresponds to 57 to 62; that stretch reads RNVEDP. The chain crosses the membrane as a helical span at residues 63 to 86; sequence RAQLIFVATLMVPLVSISSYTGLV. Topologically, residues 87 to 110 are extracellular; it reads SGLTVSFLEMPAGHALAGQEVLTP. A helical transmembrane segment spans residues 111 to 132; that stretch reads WGRYLTWALSTPMILIAVGLLA. The Cytoplasmic portion of the chain corresponds to 133-135; sequence GSN. The helical transmembrane segment at 136–159 threads the bilayer; it reads TTKLFTAVVADIGMCVTGLAAALT. Over 160 to 162 the chain is Extracellular; sequence TSS. The helical transmembrane segment at 163 to 185 threads the bilayer; sequence YLLRWVWYAISCAFFVVVLYILL. Topologically, residues 186-197 are cytoplasmic; that stretch reads AEWAEDAEIAGT. The chain crosses the membrane as a helical span at residues 198–221; it reads ADIFNTLKVLTVVLWLGYPIFWAL. The Extracellular segment spans residues 222–230; the sequence is GAEGLAVLD. A helical transmembrane segment spans residues 231-259; that stretch reads VAITSWAYSGMDIVAKYLFAFLLLRWVVN. Residue Lys-246 is modified to N6-(retinylidene)lysine. Residues 260-284 lie on the Cytoplasmic side of the membrane; the sequence is NERTVADVASGLGSGSRGGAAPADD.

It belongs to the archaeal/bacterial/fungal opsin family.

The protein localises to the cell membrane. In terms of biological role, light-driven chloride pump. This chain is Halorhodopsin (hop), found in Halobacterium sp. (strain SG1).